A 434-amino-acid chain; its full sequence is Alpha-enolase (434 aa).

S40 contributes to the Mg(2+) binding site. Substrate is bound by residues H158 and E167. The active-site Proton donor is the E210. Mg(2+) contacts are provided by D245, E293, and D318. Positions 293 and 318 each coordinate substrate. Residue K343 is the Proton acceptor of the active site. Substrate is bound by residues 370 to 373 (SHRS) and K394.

This sequence belongs to the enolase family. Homodimer. Mg(2+) is required as a cofactor.

The protein localises to the cytoplasm. The enzyme catalyses (2R)-2-phosphoglycerate = phosphoenolpyruvate + H2O. The protein operates within carbohydrate degradation; glycolysis; pyruvate from D-glyceraldehyde 3-phosphate: step 4/5. The protein is Alpha-enolase of Sceloporus undulatus (Eastern fence lizard).